Here is a 169-residue protein sequence, read N- to C-terminus: Crossover junction endodeoxyribonuclease RuvC (169 aa).

Catalysis depends on residues D15, E75, and D147. 3 residues coordinate Mg(2+): D15, E75, and D147.

Belongs to the RuvC family. Homodimer which binds Holliday junction (HJ) DNA. The HJ becomes 2-fold symmetrical on binding to RuvC with unstacked arms; it has a different conformation from HJ DNA in complex with RuvA. In the full resolvosome a probable DNA-RuvA(4)-RuvB(12)-RuvC(2) complex forms which resolves the HJ. The cofactor is Mg(2+).

It localises to the cytoplasm. The catalysed reaction is Endonucleolytic cleavage at a junction such as a reciprocal single-stranded crossover between two homologous DNA duplexes (Holliday junction).. The RuvA-RuvB-RuvC complex processes Holliday junction (HJ) DNA during genetic recombination and DNA repair. Endonuclease that resolves HJ intermediates. Cleaves cruciform DNA by making single-stranded nicks across the HJ at symmetrical positions within the homologous arms, yielding a 5'-phosphate and a 3'-hydroxyl group; requires a central core of homology in the junction. The consensus cleavage sequence is 5'-(A/T)TT(C/G)-3'. Cleavage occurs on the 3'-side of the TT dinucleotide at the point of strand exchange. HJ branch migration catalyzed by RuvA-RuvB allows RuvC to scan DNA until it finds its consensus sequence, where it cleaves and resolves the cruciform DNA. This Caulobacter sp. (strain K31) protein is Crossover junction endodeoxyribonuclease RuvC.